Here is a 157-residue protein sequence, read N- to C-terminus: Ribosome maturation factor RimP (157 aa).

Belongs to the RimP family.

The protein resides in the cytoplasm. In terms of biological role, required for maturation of 30S ribosomal subunits. This Ligilactobacillus salivarius (strain UCC118) (Lactobacillus salivarius) protein is Ribosome maturation factor RimP.